Reading from the N-terminus, the 332-residue chain is HTH-type transcriptional regulator RegA (332 aa).

An HTH lacI-type domain is found at 1–57 (MATSIKDVAREAGVSIATVSRVLNDIDVVNEDTKKKVLDAIKELGYRPNIVARSLKT). Residues 5–24 (IKDVAREAGVSIATVSRVLN) constitute a DNA-binding region (H-T-H motif).

In terms of biological role, involved in the regulation of amylase production. This Clostridium saccharobutylicum protein is HTH-type transcriptional regulator RegA (regA).